The following is a 297-amino-acid chain: uncharacterized protein (297 aa).

Helical transmembrane passes span 114 to 136, 150 to 170, 197 to 217, 227 to 247, and 269 to 289; these read YNRW…LSSG, LLYD…VFNV, MPIV…GVHL, AFTV…KAMI, and FINT…PGLL.

Belongs to the ThrE exporter (TC 2.A.79) family.

The protein resides in the cell inner membrane. This is an uncharacterized protein from Haemophilus influenzae (strain ATCC 51907 / DSM 11121 / KW20 / Rd).